The chain runs to 41 residues: Large ribosomal subunit protein bL36 (41 aa).

The protein belongs to the bacterial ribosomal protein bL36 family.

This chain is Large ribosomal subunit protein bL36, found in Ruegeria pomeroyi (strain ATCC 700808 / DSM 15171 / DSS-3) (Silicibacter pomeroyi).